A 631-amino-acid polypeptide reads, in one-letter code: Hepatocyte nuclear factor 1-alpha (631 aa).

The dimerization stretch occupies residues 1-31 (MVSKLSQLQTELLAALLESGLSKEALIQALG). The HNF-p1 domain occupies 1 to 32 (MVSKLSQLQTELLAALLESGLSKEALIQALGE). Positions 40-81 (GEGPLDKGESCGGGRGELAELPNGLGETRGSEDETDDDGEDF) are disordered. Position 70 is a phosphoserine (Ser70). The residue at position 74 (Thr74) is a Phosphothreonine. Residues 87–182 (KELENLSPEE…VAQQFTHAGQ (96 aa)) enclose the POU-specific atypical domain. Ser93 is subject to Phosphoserine. A Glycyl lysine isopeptide (Lys-Gly) (interchain with G-Cter in ubiquitin) cross-link involves residue Lys117. Interaction with DNA regions lie at residues 130–132 (QRE), 143–149 (HLSQHLN), 155–158 (KTQK), and 203–206 (RFKW). Residues 183 to 205 (GGLIEEPTGDELPTKKGRRNRFK) are disordered. Residues 197-205 (KKGRRNRFK) carry the Nuclear localization signal motif. The segment at residues 199-279 (GRRNRFKWGP…NRRKEEAFRH (81 aa)) is a DNA-binding region (homeobox; HNF1-type). Phosphoserine is present on Ser247. Interaction with DNA stretches follow at residues 263–265 (RVY) and 270–273 (NRRK). 2 disordered regions span residues 283 to 358 (MDTY…GLEP) and 545 to 567 (SDTEASSESGLHTPASQATTLHV). A compositionally biased stretch (pro residues) spans 288 to 298 (GPPPGPGPGPA). At Ser313 the chain carries Phosphoserine. The span at 325-353 (PATSETAEVPSSSGGPLVTVSTPLHQVSP) shows a compositional bias: polar residues.

The protein belongs to the HNF1 homeobox family. As to quaternary structure, binds DNA as a dimer. Heterotetramer with PCBD1; formed by a dimer of dimers. Interacts with PCBD1. Interacts with BHLHE41. Interacts with NR5A2. Interacts with SPOP; this interaction promotes ubiquitination and degradation of HNF1A. In terms of processing, ubiquitinated in s SPOP-dependent manner; leading to prteasomal degradation. Liver.

It is found in the nucleus. Its function is as follows. Transcriptional activator that regulates the tissue specific expression of multiple genes, especially in pancreatic islet cells and in liver. Binds to the inverted palindrome 5'-GTTAATNATTAAC-3'. Activates the transcription of CYP1A2, CYP2E1 and CYP3A11. Functionally, (Microbial infection) Plays a crucial role for hepatitis B virus gene transcription and DNA replication. Mechanistically, synergistically cooperates with NR5A2 to up-regulate the activity of one of the critical cis-elements in the hepatitis B virus genome enhancer II (ENII). The chain is Hepatocyte nuclear factor 1-alpha (HNF1A) from Homo sapiens (Human).